The chain runs to 362 residues: 3-isopropylmalate dehydrogenase (362 aa).

Residue 75 to 88 participates in NAD(+) binding; sequence GPKWANLPPTEQPE. Substrate-binding residues include Arg96, Arg106, Arg135, and Asp224. Asp224, Asp248, and Asp252 together coordinate Mg(2+). 282–294 contacts NAD(+); sequence GSAPDIAGLGVAN.

Belongs to the isocitrate and isopropylmalate dehydrogenases family. LeuB type 1 subfamily. As to quaternary structure, homodimer. Requires Mg(2+) as cofactor. Mn(2+) serves as cofactor.

It is found in the cytoplasm. The enzyme catalyses (2R,3S)-3-isopropylmalate + NAD(+) = 4-methyl-2-oxopentanoate + CO2 + NADH. The protein operates within amino-acid biosynthesis; L-leucine biosynthesis; L-leucine from 3-methyl-2-oxobutanoate: step 3/4. Its function is as follows. Catalyzes the oxidation of 3-carboxy-2-hydroxy-4-methylpentanoate (3-isopropylmalate) to 3-carboxy-4-methyl-2-oxopentanoate. The product decarboxylates to 4-methyl-2 oxopentanoate. This Colwellia psychrerythraea (strain 34H / ATCC BAA-681) (Vibrio psychroerythus) protein is 3-isopropylmalate dehydrogenase.